A 183-amino-acid polypeptide reads, in one-letter code: Holliday junction branch migration complex subunit RuvA (183 aa).

A domain I region spans residues 1–64 (MVVGIEGIIT…EDSNKFYGFL (64 aa)). The interval 65 to 139 (DKDEQKMFEM…DTKTKLENVS (75 aa)) is domain II. Residue Ser139 is a region of interest, flexible linker. Positions 139 to 183 (SDDKSEALAALLTLGFKQEKIISVLASAQATGTSELIKEALKKLG) are domain III.

It belongs to the RuvA family. In terms of assembly, homotetramer. Forms an RuvA(8)-RuvB(12)-Holliday junction (HJ) complex. HJ DNA is sandwiched between 2 RuvA tetramers; dsDNA enters through RuvA and exits via RuvB. An RuvB hexamer assembles on each DNA strand where it exits the tetramer. Each RuvB hexamer is contacted by two RuvA subunits (via domain III) on 2 adjacent RuvB subunits; this complex drives branch migration. In the full resolvosome a probable DNA-RuvA(4)-RuvB(12)-RuvC(2) complex forms which resolves the HJ.

Its subcellular location is the cytoplasm. The RuvA-RuvB-RuvC complex processes Holliday junction (HJ) DNA during genetic recombination and DNA repair, while the RuvA-RuvB complex plays an important role in the rescue of blocked DNA replication forks via replication fork reversal (RFR). RuvA specifically binds to HJ cruciform DNA, conferring on it an open structure. The RuvB hexamer acts as an ATP-dependent pump, pulling dsDNA into and through the RuvAB complex. HJ branch migration allows RuvC to scan DNA until it finds its consensus sequence, where it cleaves and resolves the cruciform DNA. This Campylobacter jejuni subsp. jejuni serotype O:23/36 (strain 81-176) protein is Holliday junction branch migration complex subunit RuvA.